Consider the following 312-residue polypeptide: Tetraacyldisaccharide 4'-kinase (312 aa).

60–67 contributes to the ATP binding site; sequence IAGGSGKT.

The protein belongs to the LpxK family.

The enzyme catalyses a lipid A disaccharide + ATP = a lipid IVA + ADP + H(+). It participates in glycolipid biosynthesis; lipid IV(A) biosynthesis; lipid IV(A) from (3R)-3-hydroxytetradecanoyl-[acyl-carrier-protein] and UDP-N-acetyl-alpha-D-glucosamine: step 6/6. Functionally, transfers the gamma-phosphate of ATP to the 4'-position of a tetraacyldisaccharide 1-phosphate intermediate (termed DS-1-P) to form tetraacyldisaccharide 1,4'-bis-phosphate (lipid IVA). The chain is Tetraacyldisaccharide 4'-kinase from Helicobacter acinonychis (strain Sheeba).